Reading from the N-terminus, the 149-residue chain is Transcription factor bHLH153 (149 aa).

Residues 27-76 form the bHLH domain; sequence RHKSDLSFSSKERKDKVGERISALQQIVSPYGKTDTASVLLDAMHYIEFL.

Belongs to the bHLH protein family.

It localises to the nucleus. This is Transcription factor bHLH153 from Arabidopsis thaliana (Mouse-ear cress).